The primary structure comprises 450 residues: Phosphoglucosamine mutase (450 aa).

S101 serves as the catalytic Phosphoserine intermediate. Residues S101, D240, D242, and D244 each contribute to the Mg(2+) site. Position 101 is a phosphoserine (S101).

Belongs to the phosphohexose mutase family. Requires Mg(2+) as cofactor. In terms of processing, activated by phosphorylation.

It catalyses the reaction alpha-D-glucosamine 1-phosphate = D-glucosamine 6-phosphate. Its function is as follows. Catalyzes the conversion of glucosamine-6-phosphate to glucosamine-1-phosphate. The sequence is that of Phosphoglucosamine mutase from Streptococcus equi subsp. zooepidemicus (strain H70).